A 594-amino-acid polypeptide reads, in one-letter code: Glutamate decarboxylase 1 (594 aa).

Residues 1–13 show a composition bias toward low complexity; that stretch reads MASSTPSSSATSS. The interval 1-23 is disordered; it reads MASSTPSSSATSSNAGADPNTTN. Residue Ser78 is modified to Phosphoserine. A 4-aminobutanoate-binding site is contributed by 190-192; sequence QLS. Position 405 is an N6-(pyridoxal phosphate)lysine (Lys405). Residue Arg567 coordinates 4-aminobutanoate.

Belongs to the group II decarboxylase family. Homodimer. Requires pyridoxal 5'-phosphate as cofactor.

It catalyses the reaction L-glutamate + H(+) = 4-aminobutanoate + CO2. In terms of biological role, catalyzes the synthesis of the inhibitory neurotransmitter gamma-aminobutyric acid (GABA) with pyridoxal 5'-phosphate as cofactor. The sequence is that of Glutamate decarboxylase 1 (GAD1) from Pan troglodytes (Chimpanzee).